Consider the following 118-residue polypeptide: Large ribosomal subunit protein bL17 (118 aa).

Belongs to the bacterial ribosomal protein bL17 family. In terms of assembly, part of the 50S ribosomal subunit. Contacts protein L32.

The sequence is that of Large ribosomal subunit protein bL17 from Onion yellows phytoplasma (strain OY-M).